The sequence spans 181 residues: Adenylyl-sulfate kinase (181 aa).

20–27 serves as a coordination point for ATP; that stretch reads GLSGAGKS. Serine 94 (phosphoserine intermediate) is an active-site residue.

It belongs to the APS kinase family.

The catalysed reaction is adenosine 5'-phosphosulfate + ATP = 3'-phosphoadenylyl sulfate + ADP + H(+). The protein operates within sulfur metabolism; hydrogen sulfide biosynthesis; sulfite from sulfate: step 2/3. Its function is as follows. Catalyzes the synthesis of activated sulfate. The protein is Adenylyl-sulfate kinase of Deinococcus deserti (strain DSM 17065 / CIP 109153 / LMG 22923 / VCD115).